The following is a 370-amino-acid chain: Flagellar P-ring protein (370 aa).

Residues 1–21 (MKYILIKLSIVMIFIINSASK) form the signal peptide.

Belongs to the FlgI family. As to quaternary structure, the basal body constitutes a major portion of the flagellar organelle and consists of four rings (L,P,S, and M) mounted on a central rod.

Its subcellular location is the bacterial flagellum basal body. Its function is as follows. Assembles around the rod to form the L-ring and probably protects the motor/basal body from shearing forces during rotation. The sequence is that of Flagellar P-ring protein from Wigglesworthia glossinidia brevipalpis.